The following is an 87-amino-acid chain: Mitochondrial import inner membrane translocase subunit TIM9 (87 aa).

The Twin CX3C motif signature appears at 35–59 (CFTDCVNDFTSSKLTSKEESCILKC). 2 cysteine pairs are disulfide-bonded: cysteine 35–cysteine 59 and cysteine 39–cysteine 55.

Belongs to the small Tim family. As to quaternary structure, heterohexamer; composed of 3 copies of TIM9 and 3 copies of TIM10, named soluble 70 kDa complex. Associates with the TIM22 complex, whose core is composed of TIM22 and TIM54. Interacts with the transmembrane regions of multi-pass transmembrane proteins in transit.

It localises to the mitochondrion inner membrane. Mitochondrial intermembrane chaperone that participates in the import and insertion of multi-pass transmembrane proteins into the mitochondrial inner membrane. Also required for the transfer of beta-barrel precursors from the TOM complex to the sorting and assembly machinery (SAM complex) of the outer membrane. Acts as a chaperone-like protein that protects the hydrophobic precursors from aggregation and guide them through the mitochondrial intermembrane space. This chain is Mitochondrial import inner membrane translocase subunit TIM9 (TIM9), found in Candida glabrata (strain ATCC 2001 / BCRC 20586 / JCM 3761 / NBRC 0622 / NRRL Y-65 / CBS 138) (Yeast).